We begin with the raw amino-acid sequence, 296 residues long: Ribonuclease MRP protein subunit POP4 (296 aa).

Disordered stretches follow at residues 29–74 (LLQQ…VDPK) and 148–173 (SASG…KRLK). Residues 36 to 56 (KNEKDKKGTSDVDVSMKESHQ) are compositionally biased toward basic and acidic residues. A compositionally biased stretch (polar residues) spans 57–66 (ADSLPTPSKT). A Nuclear localization signal motif is present at residues 160 to 167 (SKRSKSRM). Basic residues predominate over residues 163-173 (SKSRMSMKRLK).

This sequence belongs to the eukaryotic/archaeal RNase P protein component 1 family. In terms of assembly, component of nuclear RNase MRP complexes. Several subunits of RNase P are also part of the RNase MRP complex. RNase MRP consists of a catalytic RNA moiety and several protein subunits.

It is found in the nucleus. In terms of biological role, component of the MRP ribonuclease complex, which cleaves pre-rRNA sequences. Required for rRNA maturation, including 5.8S rRNA processing. Seems not involved in tRNA maturation. This chain is Ribonuclease MRP protein subunit POP4, found in Arabidopsis thaliana (Mouse-ear cress).